The chain runs to 92 residues: DNA/RNA-binding protein Alba (92 aa).

Lys-11 carries the post-translational modification N6-acetyllysine.

The protein belongs to the histone-like Alba family. Acetylated. Acetylation at Lys-11 decreases DNA-binding affinity.

It localises to the cytoplasm. It is found in the chromosome. Functionally, binds double-stranded DNA tightly but without sequence specificity. Involved in DNA compaction. The polypeptide is DNA/RNA-binding protein Alba (Pyrobaculum aerophilum (strain ATCC 51768 / DSM 7523 / JCM 9630 / CIP 104966 / NBRC 100827 / IM2)).